A 954-amino-acid polypeptide reads, in one-letter code: SWI/SNF-related matrix-associated actin-dependent regulator of chromatin subfamily A-like protein 1 (954 aa).

2 disordered regions span residues methionine 1–alanine 20 and lysine 27–lysine 238. N-acetylserine is present on serine 2. The stretch at leucine 3–glutamine 34 forms a coiled coil. The mediates interaction with RPA2 stretch occupies residues leucine 5–alanine 30. Positions glutamate 7–alanine 20 are enriched in basic and acidic residues. Positions lysine 72–aspartate 83 are enriched in polar residues. Serine 112, serine 123, serine 129, and serine 151 each carry phosphoserine. 2 stretches are compositionally biased toward polar residues: residues lysine 171 to glutamine 183 and alanine 197 to lysine 238. Serine 198 is subject to Phosphoserine. 2 HARP domains span residues serine 226–glutamate 303 and serine 327–proline 398. Residues asparagine 445–threonine 600 enclose the Helicase ATP-binding domain. Residue aspartate 458–threonine 465 participates in ATP binding. The DESH box signature appears at aspartate 549–histidine 552. The Nuclear localization signal motif lies at arginine 644–isoleucine 661. The Helicase C-terminal domain maps to tyrosine 716 to serine 869. Positions glutamate 904 to serine 934 are disordered. Positions glycine 909–serine 919 are enriched in low complexity. Positions glutamine 920–serine 934 are enriched in polar residues.

The protein belongs to the SNF2/RAD54 helicase family. SMARCAL1 subfamily. In terms of assembly, interacts with RPA2; the interaction is direct and mediates the recruitment by the RPA complex of SMARCAL1 to sites of DNA damage. Post-translationally, DNA damage-regulated phosphorylation by kinases that may include ATM, ATR and PRKDC. Ubiquitously expressed, with high levels in testis.

The protein localises to the nucleus. It carries out the reaction ATP + H2O = ADP + phosphate + H(+). ATP-dependent annealing helicase that binds selectively to fork DNA relative to ssDNA or dsDNA and catalyzes the rewinding of the stably unwound DNA. Rewinds single-stranded DNA bubbles that are stably bound by replication protein A (RPA). Acts throughout the genome to reanneal stably unwound DNA, performing the opposite reaction of many enzymes, such as helicases and polymerases, that unwind DNA. May play an important role in DNA damage response by acting at stalled replication forks. This chain is SWI/SNF-related matrix-associated actin-dependent regulator of chromatin subfamily A-like protein 1, found in Homo sapiens (Human).